Here is a 557-residue protein sequence, read N- to C-terminus: Potassium-transporting ATPase potassium-binding subunit (557 aa).

Helical transmembrane passes span 5–25 (GFLLIATFLLVLMVLARPLGS), 63–83 (LCAILGLNMLGLAVLFFMLLG), 132–152 (GLTVQNFLSAASGIAVIFALI), 170–190 (LLRITLWVLVPVALLIALFFI), 253–273 (FVQMLAIFLIPTALCFAFGEV), 283–303 (LLWAMSVIFVICVGVVMWAEV), 329–349 (VLVSSLFAVVTTAASCGAVIA), 356–376 (ALGGMVPMWLMQIGEVVFGGV), 379–399 (GLYGMMLFVLLAVFIAGLMIG), 416–436 (LTALAILVTPTLVLMGAALAM), 484–504 (LLAFCMFVGRFGVIIPVMAIA), and 526–546 (LFVGLLIGTVLLVGALTFIPA).

The protein belongs to the KdpA family. In terms of assembly, the system is composed of three essential subunits: KdpA, KdpB and KdpC.

It localises to the cell inner membrane. Its function is as follows. Part of the high-affinity ATP-driven potassium transport (or Kdp) system, which catalyzes the hydrolysis of ATP coupled with the electrogenic transport of potassium into the cytoplasm. This subunit binds the periplasmic potassium ions and delivers the ions to the membrane domain of KdpB through an intramembrane tunnel. In Escherichia coli (strain SE11), this protein is Potassium-transporting ATPase potassium-binding subunit.